Here is a 142-residue protein sequence, read N- to C-terminus: Large ribosomal subunit protein uL11 (142 aa).

The protein belongs to the universal ribosomal protein uL11 family. In terms of assembly, part of the ribosomal stalk of the 50S ribosomal subunit. Interacts with L10 and the large rRNA to form the base of the stalk. L10 forms an elongated spine to which L12 dimers bind in a sequential fashion forming a multimeric L10(L12)X complex. One or more lysine residues are methylated.

Forms part of the ribosomal stalk which helps the ribosome interact with GTP-bound translation factors. This Nitrobacter hamburgensis (strain DSM 10229 / NCIMB 13809 / X14) protein is Large ribosomal subunit protein uL11.